A 253-amino-acid polypeptide reads, in one-letter code: POU Class 2 homeobox-associating factor 3 (253 aa).

An OCA domain is found at 5–27 (PKVYQGVRVKMTVKELLQQRRAH).

The protein belongs to the POU2AF family. As to quaternary structure, interacts with POU2F3 in a DNA-dependent manner; this interaction increases POU2F3 transactivation activity. As to expression, expressed in tuft cells.

Its subcellular location is the cytoplasm. It is found in the nucleus. Functionally, transcriptional coactivator that specifically associates with POU2F3. This complex drives the development of tuft cells, a rare a rare chemosensory cells that coordinate immune and neural functions within mucosal epithelial tissues. The protein is POU Class 2 homeobox-associating factor 3 of Mus musculus (Mouse).